The chain runs to 83 residues: Disintegrin isoform D-2 (83 aa).

One can recognise a Disintegrin domain in the interval P2–H83. Disulfide bonds link C5-C24, C16-C34, C18-C29, C28-C51, C42-C48, C47-C72, and C60-C79. Positions R64–D66 match the Cell attachment site motif.

Belongs to the venom metalloproteinase (M12B) family. P-II subfamily. P-IIa sub-subfamily. Monomer (disintegrin). In terms of tissue distribution, expressed by the venom gland.

Its subcellular location is the secreted. In terms of biological role, inhibits fibrinogen interaction with platelets. Acts by binding to the alpha-IIb/beta-3 (ITGA2B/ITGB3) on the platelet surface and inhibits aggregation induced by ADP, thrombin, platelet-activating factor and collagen. The chain is Disintegrin isoform D-2 from Bitis arietans (African puff adder).